The sequence spans 527 residues: Peptide chain release factor 3 (527 aa).

Positions 9-277 constitute a tr-type G domain; it reads AKRRTFAIIS…AVVNWAPKPL (269 aa). Residues 18–25, 86–90, and 140–143 each bind GTP; these read SHPDAGKT, DTPGH, and NKLD.

The protein belongs to the TRAFAC class translation factor GTPase superfamily. Classic translation factor GTPase family. PrfC subfamily.

It is found in the cytoplasm. Functionally, increases the formation of ribosomal termination complexes and stimulates activities of RF-1 and RF-2. It binds guanine nucleotides and has strong preference for UGA stop codons. It may interact directly with the ribosome. The stimulation of RF-1 and RF-2 is significantly reduced by GTP and GDP, but not by GMP. The sequence is that of Peptide chain release factor 3 from Pseudomonas syringae pv. syringae (strain B728a).